We begin with the raw amino-acid sequence, 245 residues long: Zinc finger CCCH domain-containing protein 54 (245 aa).

The segment at 92 to 119 (TYCAVACPAFRNGACHRGDSCEFAHGVF) adopts a C3H1-type zinc-finger fold. The segment at 175–204 (GNGDGVTMRMDDEGYDTSRSPVRSGKDDLD) is disordered.

Interacts with MARD1/FLZ9 and RD21A. In terms of tissue distribution, specifically expressed in embryo (at protein level).

It is found in the nucleus. Its function is as follows. Embryo-specific transcription factor required at the globular to heart stage transition in embryo development. This is Zinc finger CCCH domain-containing protein 54 from Arabidopsis thaliana (Mouse-ear cress).